We begin with the raw amino-acid sequence, 479 residues long: Solute carrier family 7 member 13 (479 aa).

Over 1-14 (MAMDIEKKIYLKRQ) the chain is Cytoplasmic. The chain crosses the membrane as a helical span at residues 15-35 (LGYFWGTNFLIINIIGAGIFV). The Extracellular segment spans residues 36 to 47 (SPKGVLQYSSMN). The helical transmembrane segment at 48 to 68 (VGVSLCVWVFCAVLSMTSTLC) threads the bilayer. At 69-89 (AAEIGITFPYTVAHYYFLKRC) the chain is on the cytoplasmic side. Residues 90-110 (FGPFVAFLRLWTSLFTGPGVL) form a helical membrane-spanning segment. Topologically, residues 111-129 (ASQALLLAEYGIQPFYPSC) are extracellular. A helical transmembrane segment spans residues 130–150 (SAPAVPKKCLALAMLWIVGIL). The Cytoplasmic portion of the chain corresponds to 151 to 165 (NSRGVKELSWLQTVS). The chain crosses the membrane as a helical span at residues 166–186 (MVLKMGILSFISLSGLFLLVT). At 187-208 (GRKENVRRLQNAFDAEFPEVSR) the chain is on the extracellular side. A helical transmembrane segment spans residues 209–229 (LIEAIFQGYFAFSGGGSFTYV). Over 230 to 242 (AGELKEPSKTIPR) the chain is Cytoplasmic. A helical transmembrane segment spans residues 243-263 (CIFTALPLVTVVYLLANLSYL). Topologically, residues 264–289 (TVLSPQELLSSDAVALTWTDRVIPQL) are extracellular. Residues 290–310 (TWSVPFAISASLFSNLVTSVF) traverse the membrane as a helical segment. Topologically, residues 311 to 338 (ETSRTSYIASRNGQLPLLCSTLNVHSSP) are cytoplasmic. Residues 339 to 359 (FIAVLLDVSMGSIAIVLTNLI) form a helical membrane-spanning segment. Residue Glu360 is a topological domain, extracellular. Residues 361–381 (LINYLFFVFSIWTVLSVIGIL) traverse the membrane as a helical segment. Residues 382–396 (KLRYQEPNLHRPYKV) lie on the Cytoplasmic side of the membrane. The helical transmembrane segment at 397–417 (FSPFLFITAAISLSMVLIPLI) threads the bilayer. Topologically, residues 418 to 423 (KSPKMQ) are extracellular. The chain crosses the membrane as a helical span at residues 424-444 (YIYVFLFFLGGLLFYVPLIHF). Topologically, residues 445–479 (KLKLIWFQKLTCYLQLLFNICIPDVSDEHVAEEES) are cytoplasmic.

This sequence belongs to the amino acid-polyamine-organocation (APC) superfamily. As to quaternary structure, disulfide-linked heterodimer composed of the catalytic light subunit SLC7A13 and the heavy subunit SLC3A1.

The protein localises to the apical cell membrane. It carries out the reaction L-cystine(out) + L-aspartate(in) = L-cystine(in) + L-aspartate(out). It catalyses the reaction L-cystine(out) = L-cystine(in). The enzyme catalyses L-aspartate(in) + L-glutamate(out) = L-aspartate(out) + L-glutamate(in). The catalysed reaction is L-aspartate(in) + L-glutamine(out) = L-aspartate(out) + L-glutamine(in). It carries out the reaction L-aspartate(in) + L-methionine(out) = L-aspartate(out) + L-methionine(in). It catalyses the reaction L-leucine(out) + L-aspartate(in) = L-leucine(in) + L-aspartate(out). The enzyme catalyses L-valine(out) + L-aspartate(in) = L-valine(in) + L-aspartate(out). The catalysed reaction is L-aspartate(in) + L-phenylalanine(out) = L-aspartate(out) + L-phenylalanine(in). It carries out the reaction L-tyrosine(out) + L-aspartate(in) = L-tyrosine(in) + L-aspartate(out). It catalyses the reaction L-tryptophan(out) + L-aspartate(in) = L-tryptophan(in) + L-aspartate(out). In terms of biological role, associates with SLC3A1/rBAT to form a functional heterodimeric complex that transports anionic and neutral amino acids across the apical plasma membrane of renal epithelium. Preferentially mediates exchange transport, but can also operate via facilitated diffusion. May act as a major transporter for L-cystine in late proximal tubules, ensuring its reabsorption from the luminal fluid in exchange for cytosolic L-glutamate or L-aspartate. This Rattus norvegicus (Rat) protein is Solute carrier family 7 member 13 (Slc7a13).